The chain runs to 138 residues: ATP synthase epsilon chain (138 aa).

The protein belongs to the ATPase epsilon chain family. As to quaternary structure, F-type ATPases have 2 components, CF(1) - the catalytic core - and CF(0) - the membrane proton channel. CF(1) has five subunits: alpha(3), beta(3), gamma(1), delta(1), epsilon(1). CF(0) has three main subunits: a, b and c.

It is found in the cell inner membrane. In terms of biological role, produces ATP from ADP in the presence of a proton gradient across the membrane. The chain is ATP synthase epsilon chain from Blochmanniella floridana.